Consider the following 222-residue polypeptide: Oligoribonuclease (222 aa).

A disordered region spans residues 19-38 (PMASSSSTGKQEESVNGSLE). Residues 21-35 (ASSSSTGKQEESVNG) are compositionally biased toward polar residues. An Exonuclease domain is found at 46 to 210 (LVWIDLEMTG…DDIRESIKEL (165 aa)). The active site involves His167.

The protein belongs to the oligoribonuclease family.

In terms of biological role, 3'-to-5' exoribonuclease specific for small oligoribonucleotides. This chain is Oligoribonuclease, found in Arabidopsis thaliana (Mouse-ear cress).